Consider the following 394-residue polypeptide: 1-deoxy-D-xylulose 5-phosphate reductoisomerase (394 aa).

NADPH is bound by residues Thr6, Gly7, Ser8, Ile9, Ala32, and Asn124. Lys125 is a binding site for 1-deoxy-D-xylulose 5-phosphate. Residue Glu126 coordinates NADPH. Asp148 is a Mn(2+) binding site. Positions 149, 150, 174, and 197 each coordinate 1-deoxy-D-xylulose 5-phosphate. Residue Glu150 coordinates Mn(2+). Residue Gly203 coordinates NADPH. Positions 210, 215, 216, and 219 each coordinate 1-deoxy-D-xylulose 5-phosphate. Mn(2+) is bound at residue Glu219.

Belongs to the DXR family. The cofactor is Mg(2+). Mn(2+) serves as cofactor.

It catalyses the reaction 2-C-methyl-D-erythritol 4-phosphate + NADP(+) = 1-deoxy-D-xylulose 5-phosphate + NADPH + H(+). It participates in isoprenoid biosynthesis; isopentenyl diphosphate biosynthesis via DXP pathway; isopentenyl diphosphate from 1-deoxy-D-xylulose 5-phosphate: step 1/6. In terms of biological role, catalyzes the NADPH-dependent rearrangement and reduction of 1-deoxy-D-xylulose-5-phosphate (DXP) to 2-C-methyl-D-erythritol 4-phosphate (MEP). The protein is 1-deoxy-D-xylulose 5-phosphate reductoisomerase of Streptomyces avermitilis (strain ATCC 31267 / DSM 46492 / JCM 5070 / NBRC 14893 / NCIMB 12804 / NRRL 8165 / MA-4680).